Here is a 386-residue protein sequence, read N- to C-terminus: MNISNIKIMLLGSGELGKEFIIAAQRLGIHTIVVDRYKNAPAMQVAHESYVIDMLNSDALEQLILAKNPTYIVPEIEAINTDSLVKLEAHNFNIIPCAKATKLTMDRQGIRALAAQQLNLQTSKFAFANSEQEYLDVIQSIGLPFVIKPVMSSSGKGQSIVKEHNEIKKAWDYAQNGSRGHAKGVIVEQFIDFDYEITLLTVRHKDGTSFCDPIGHIQKDGDYRFSWQPHTMPDTALAKSQEIAKEITDALGGYGVFGVELFIKGDEVFFNEVSPRPHDTGMVTLISQNINEFELHLRAIVGLPIPDIQTLQPSASAAILLEGDTANASICGIDKALADANVDIRIFGKKEIHGKRRMGVVLAKAQNTHIALETSKQALAHIHLTK.

Residues 15–16 and Glu75 contribute to the N(1)-(5-phospho-beta-D-ribosyl)glycinamide site; that span reads EL. ATP contacts are provided by residues Arg107, Lys148, 153 to 158, 188 to 191, and Glu196; these read SSGKGQ and EQFI. The ATP-grasp domain maps to 112 to 301; the sequence is ALAAQQLNLQ…EFELHLRAIV (190 aa). Mg(2+) contacts are provided by Glu260 and Glu272. Residues Asp279, Lys349, and 356–357 each bind N(1)-(5-phospho-beta-D-ribosyl)glycinamide; that span reads RR.

Belongs to the PurK/PurT family. In terms of assembly, homodimer.

It catalyses the reaction N(1)-(5-phospho-beta-D-ribosyl)glycinamide + formate + ATP = N(2)-formyl-N(1)-(5-phospho-beta-D-ribosyl)glycinamide + ADP + phosphate + H(+). Its pathway is purine metabolism; IMP biosynthesis via de novo pathway; N(2)-formyl-N(1)-(5-phospho-D-ribosyl)glycinamide from N(1)-(5-phospho-D-ribosyl)glycinamide (formate route): step 1/1. In terms of biological role, involved in the de novo purine biosynthesis. Catalyzes the transfer of formate to 5-phospho-ribosyl-glycinamide (GAR), producing 5-phospho-ribosyl-N-formylglycinamide (FGAR). Formate is provided by PurU via hydrolysis of 10-formyl-tetrahydrofolate. This is Formate-dependent phosphoribosylglycinamide formyltransferase from Francisella tularensis subsp. tularensis (strain WY96-3418).